The primary structure comprises 569 residues: Urease subunit alpha (569 aa).

One can recognise a Urease domain in the interval 131–569 (GGIDAHIHFI…VPMAQRYFLF (439 aa)). 3 residues coordinate Ni(2+): histidine 136, histidine 138, and lysine 219. N6-carboxylysine is present on lysine 219. Histidine 221 contributes to the substrate binding site. Residues histidine 248 and histidine 274 each contribute to the Ni(2+) site. The active-site Proton donor is the histidine 322. Residue aspartate 362 participates in Ni(2+) binding.

It belongs to the metallo-dependent hydrolases superfamily. Urease alpha subunit family. As to quaternary structure, heterotrimer of UreA (gamma), UreB (beta) and UreC (alpha) subunits. Three heterotrimers associate to form the active enzyme. Ni cation is required as a cofactor. Post-translationally, carboxylation allows a single lysine to coordinate two nickel ions.

The protein localises to the cytoplasm. It catalyses the reaction urea + 2 H2O + H(+) = hydrogencarbonate + 2 NH4(+). Its pathway is nitrogen metabolism; urea degradation; CO(2) and NH(3) from urea (urease route): step 1/1. The sequence is that of Urease subunit alpha from Bacillus sp. (strain TB-90).